The primary structure comprises 316 residues: 4-diphosphocytidyl-2-C-methyl-D-erythritol kinase (316 aa).

Lys11 is an active-site residue. 99–109 (PVAAGLAGGST) lines the ATP pocket. Residue Asp141 is part of the active site.

The protein belongs to the GHMP kinase family. IspE subfamily.

It carries out the reaction 4-CDP-2-C-methyl-D-erythritol + ATP = 4-CDP-2-C-methyl-D-erythritol 2-phosphate + ADP + H(+). It participates in isoprenoid biosynthesis; isopentenyl diphosphate biosynthesis via DXP pathway; isopentenyl diphosphate from 1-deoxy-D-xylulose 5-phosphate: step 3/6. Functionally, catalyzes the phosphorylation of the position 2 hydroxy group of 4-diphosphocytidyl-2C-methyl-D-erythritol. The sequence is that of 4-diphosphocytidyl-2-C-methyl-D-erythritol kinase from Gloeothece citriformis (strain PCC 7424) (Cyanothece sp. (strain PCC 7424)).